We begin with the raw amino-acid sequence, 218 residues long: DNA-directed RNA polymerase III subunit RPC7-like (218 aa).

The disordered stretch occupies residues 130-218; sequence TIILPKRPPK…SDDNMDEAIY (89 aa). Over residues 139-160 the composition is skewed to basic and acidic residues; sequence KSTDDKEETIQKLETLEKKEEE. Acidic residues-rich tracts occupy residues 161 to 193 and 201 to 218; these read VTSEEDEEKEEEEEKEEGEEEEYDEEEHEEETD and NGEDFGGDSDDNMDEAIY.

Belongs to the eukaryotic RPC7 RNA polymerase subunit family. In terms of assembly, component of the RNA polymerase III (Pol III) complex consisting of 17 subunits. Pol III exists as two alternative complexes defined by the mutually exclusive incorporation of subunit POLR3G/RPC7alpha or POLR3GL/RPC7beta. Found in a trimeric complex with POLR3C/RPC3 and POLR3F/RPC6. Directly interacts with POLR3C. In terms of tissue distribution, expressed in the liver.

Its subcellular location is the nucleus. DNA-dependent RNA polymerase catalyzes the transcription of DNA into RNA using the four ribonucleoside triphosphates as substrates. Specific peripheric component of RNA polymerase III which synthesizes small RNAs, such as 5S rRNA and tRNAs. The protein is DNA-directed RNA polymerase III subunit RPC7-like of Mus musculus (Mouse).